Consider the following 194-residue polypeptide: Protein GrpE (194 aa).

Positions 1–53 (MVENEKTSVEETEEKAETEDEMLTEDPSNEDSDEANEEGNELSEEEKRIAELE) are disordered. Residues 10–44 (EETEEKAETEDEMLTEDPSNEDSDEANEEGNELSE) show a composition bias toward acidic residues.

The protein belongs to the GrpE family. In terms of assembly, homodimer.

The protein localises to the cytoplasm. In terms of biological role, participates actively in the response to hyperosmotic and heat shock by preventing the aggregation of stress-denatured proteins, in association with DnaK and GrpE. It is the nucleotide exchange factor for DnaK and may function as a thermosensor. Unfolded proteins bind initially to DnaJ; upon interaction with the DnaJ-bound protein, DnaK hydrolyzes its bound ATP, resulting in the formation of a stable complex. GrpE releases ADP from DnaK; ATP binding to DnaK triggers the release of the substrate protein, thus completing the reaction cycle. Several rounds of ATP-dependent interactions between DnaJ, DnaK and GrpE are required for fully efficient folding. In Halalkalibacterium halodurans (strain ATCC BAA-125 / DSM 18197 / FERM 7344 / JCM 9153 / C-125) (Bacillus halodurans), this protein is Protein GrpE.